The chain runs to 235 residues: Enolase-phosphatase E1 (235 aa).

It belongs to the HAD-like hydrolase superfamily. MasA/MtnC family. Monomer. The cofactor is Mg(2+).

The enzyme catalyses 5-methylsulfanyl-2,3-dioxopentyl phosphate + H2O = 1,2-dihydroxy-5-(methylsulfanyl)pent-1-en-3-one + phosphate. The protein operates within amino-acid biosynthesis; L-methionine biosynthesis via salvage pathway; L-methionine from S-methyl-5-thio-alpha-D-ribose 1-phosphate: step 3/6. Its pathway is amino-acid biosynthesis; L-methionine biosynthesis via salvage pathway; L-methionine from S-methyl-5-thio-alpha-D-ribose 1-phosphate: step 4/6. Functionally, bifunctional enzyme that catalyzes the enolization of 2,3-diketo-5-methylthiopentyl-1-phosphate (DK-MTP-1-P) into the intermediate 2-hydroxy-3-keto-5-methylthiopentenyl-1-phosphate (HK-MTPenyl-1-P), which is then dephosphorylated to form the acireductone 1,2-dihydroxy-3-keto-5-methylthiopentene (DHK-MTPene). This is Enolase-phosphatase E1 from Parvibaculum lavamentivorans (strain DS-1 / DSM 13023 / NCIMB 13966).